Here is a 127-residue protein sequence, read N- to C-terminus: MKKIIAITGFAMLGGGLREGLSLLVTWPQHFWITCLINIVGAFVLSLITNLLPARLPVSEDIVIGMSVGFVGSFTTFSTFTFETLQSFQSGHSVLALSYVAASLGLGLLAGLAGNFLSTYWLPKEEF.

The next 4 membrane-spanning stretches (helical) occupy residues 4–24 (IIAI…LSLL), 31–51 (FWIT…ITNL), 62–82 (IVIG…TFTF), and 94–114 (VLAL…GLAG). 2 residues coordinate Na(+): Gly72 and Thr75.

Belongs to the fluoride channel Fluc/FEX (TC 1.A.43) family.

The protein localises to the cell membrane. It catalyses the reaction fluoride(in) = fluoride(out). With respect to regulation, na(+) is not transported, but it plays an essential structural role and its presence is essential for fluoride channel function. Fluoride-specific ion channel. Important for reducing fluoride concentration in the cell, thus reducing its toxicity. The protein is Fluoride-specific ion channel FluC 2 of Lactiplantibacillus plantarum (strain ATCC BAA-793 / NCIMB 8826 / WCFS1) (Lactobacillus plantarum).